Reading from the N-terminus, the 289-residue chain is MDYLVKAIAYDGKVRAYAANTTETIHEAQRRHNTWPTASAALGRTMTAAVMLGAMLKGEDKLTVKIEGGGPIGAIVADGNAKGDVRGYVSNPHVHFDLNEHGKLDVRRAVGTSGTLSVVKDLGLRDLFTGQVEIVSGEIGEDFTYYLVSSEQVPSSVGVGVLVNPDNTILAAGGFILQLLPGTDDETITKLETNLSQVEPISKLIQKGLTPEEVLAAVLGEEPEVLETVPVRFTCNCSKERFARGIIGLGKDEIQQMIDEDGQAEAQCHFCNETYLFTKEELEALRDEI.

Disulfide bonds link Cys-235-Cys-237 and Cys-268-Cys-271.

The protein belongs to the HSP33 family. Under oxidizing conditions two disulfide bonds are formed involving the reactive cysteines. Under reducing conditions zinc is bound to the reactive cysteines and the protein is inactive.

The protein localises to the cytoplasm. In terms of biological role, redox regulated molecular chaperone. Protects both thermally unfolding and oxidatively damaged proteins from irreversible aggregation. Plays an important role in the bacterial defense system toward oxidative stress. This is 33 kDa chaperonin from Bacillus licheniformis (strain ATCC 14580 / DSM 13 / JCM 2505 / CCUG 7422 / NBRC 12200 / NCIMB 9375 / NCTC 10341 / NRRL NRS-1264 / Gibson 46).